The chain runs to 274 residues: Thiamine kinase (274 aa).

Belongs to the thiamine kinase family.

It catalyses the reaction thiamine + ATP = thiamine phosphate + ADP + H(+). It participates in cofactor biosynthesis; thiamine diphosphate biosynthesis; thiamine phosphate from thiamine: step 1/1. In terms of biological role, catalyzes the ATP-dependent phosphorylation of thiamine to thiamine phosphate. Is involved in thiamine salvage. The chain is Thiamine kinase from Escherichia coli O45:K1 (strain S88 / ExPEC).